Consider the following 453-residue polypeptide: Bifunctional protein GlmU (453 aa).

Residues 1 to 228 (MPHWAAVIMA…VHEALGINSR (228 aa)) form a pyrophosphorylase region. UDP-N-acetyl-alpha-D-glucosamine contacts are provided by residues K23, Q73, 78–79 (GT), 100–102 (SGD), G139, E153, N168, and N226. D102 is a binding site for Mg(2+). N226 provides a ligand contact to Mg(2+). The linker stretch occupies residues 229–249 (AQLAAAEDVARQRILSYWMEE). Positions 250-453 (GVTIIDPRST…IENWVRNKKK (204 aa)) are N-acetyltransferase. UDP-N-acetyl-alpha-D-glucosamine-binding residues include R331 and K349. H361 acts as the Proton acceptor in catalysis. Y364 and N375 together coordinate UDP-N-acetyl-alpha-D-glucosamine. Acetyl-CoA contacts are provided by residues A378, 384-385 (NY), S403, A421, and R438.

This sequence in the N-terminal section; belongs to the N-acetylglucosamine-1-phosphate uridyltransferase family. In the C-terminal section; belongs to the transferase hexapeptide repeat family. In terms of assembly, homotrimer. It depends on Mg(2+) as a cofactor.

It localises to the cytoplasm. The enzyme catalyses alpha-D-glucosamine 1-phosphate + acetyl-CoA = N-acetyl-alpha-D-glucosamine 1-phosphate + CoA + H(+). It carries out the reaction N-acetyl-alpha-D-glucosamine 1-phosphate + UTP + H(+) = UDP-N-acetyl-alpha-D-glucosamine + diphosphate. It functions in the pathway nucleotide-sugar biosynthesis; UDP-N-acetyl-alpha-D-glucosamine biosynthesis; N-acetyl-alpha-D-glucosamine 1-phosphate from alpha-D-glucosamine 6-phosphate (route II): step 2/2. It participates in nucleotide-sugar biosynthesis; UDP-N-acetyl-alpha-D-glucosamine biosynthesis; UDP-N-acetyl-alpha-D-glucosamine from N-acetyl-alpha-D-glucosamine 1-phosphate: step 1/1. The protein operates within bacterial outer membrane biogenesis; LPS lipid A biosynthesis. In terms of biological role, catalyzes the last two sequential reactions in the de novo biosynthetic pathway for UDP-N-acetylglucosamine (UDP-GlcNAc). The C-terminal domain catalyzes the transfer of acetyl group from acetyl coenzyme A to glucosamine-1-phosphate (GlcN-1-P) to produce N-acetylglucosamine-1-phosphate (GlcNAc-1-P), which is converted into UDP-GlcNAc by the transfer of uridine 5-monophosphate (from uridine 5-triphosphate), a reaction catalyzed by the N-terminal domain. This Desulfitobacterium hafniense (strain Y51) protein is Bifunctional protein GlmU.